We begin with the raw amino-acid sequence, 2355 residues long: Acetyl-CoA carboxylase 2 (2355 aa).

Positions 138–645 (PIHSILVATN…HTGWLDSRIA (508 aa)) constitute a Biotin carboxylation domain. In terms of domain architecture, ATP-grasp spans 291–485 (GRSLVTVPEE…AAQVAVGMGI (195 aa)). ATP is bound at residue 317–374 (CQVVGYPAMIKASWGGGGKGIRKVHNDDEVRALFKQVQGEVPGSPIFIMKVASQSRHL). Mg(2+) is bound by residues Glu-440, Glu-454, and Asn-456. Mn(2+) is bound by residues Glu-440, Glu-454, and Asn-456. Arg-458 is an active-site residue. The Biotinyl-binding domain maps to 772-846 (LQNDHDPSKL…QAGELIAKLD (75 aa)). Position 813 is an N6-biotinyllysine (Lys-813). Position 1133 is a phosphothreonine (Thr-1133). Position 1293 is a phosphoserine (Ser-1293). In terms of domain architecture, CoA carboxyltransferase N-terminal spans 1593–1932 (QYKPLNNLDR…YVGGPLPVLA (340 aa)). A carboxyltransferase region spans residues 1593–2251 (QYKPLNNLDR…ESSLVRNIRK (659 aa)). Residues Arg-1841, Lys-2142, and Arg-2144 each coordinate CoA. Positions 1936–2251 (PPERTVEYIP…ESSLVRNIRK (316 aa)) constitute a CoA carboxyltransferase C-terminal domain.

In terms of assembly, homodimer. Requires biotin as cofactor. Mg(2+) serves as cofactor. Mn(2+) is required as a cofactor. Widely expressed at low levels.

It localises to the cytoplasm. The protein resides in the cytosol. The catalysed reaction is hydrogencarbonate + acetyl-CoA + ATP = malonyl-CoA + ADP + phosphate + H(+). It carries out the reaction N(6)-biotinyl-L-lysyl-[protein] + hydrogencarbonate + ATP = N(6)-carboxybiotinyl-L-lysyl-[protein] + ADP + phosphate + H(+). Its pathway is lipid metabolism; malonyl-CoA biosynthesis; malonyl-CoA from acetyl-CoA: step 1/1. Multifunctional enzyme that catalyzes the carboxylation of acetyl-CoA, forming malonyl-CoA, which is used in the plastid for fatty acid synthesis and in the cytosol in various biosynthetic pathways including fatty acid elongation. The protein is Acetyl-CoA carboxylase 2 (ACC2) of Arabidopsis thaliana (Mouse-ear cress).